We begin with the raw amino-acid sequence, 631 residues long: Chaperone protein DnaK (631 aa).

The residue at position 198 (T198) is a Phosphothreonine; by autocatalysis. Residues 598–631 (YSAQQGGEQPGAAKKDDVVDAEFTEVDDDKKKSA) are disordered.

Belongs to the heat shock protein 70 family.

Acts as a chaperone. In Azorhizobium caulinodans (strain ATCC 43989 / DSM 5975 / JCM 20966 / LMG 6465 / NBRC 14845 / NCIMB 13405 / ORS 571), this protein is Chaperone protein DnaK.